A 172-amino-acid chain; its full sequence is Lipopolysaccharide export system protein LptA (172 aa).

Residues 1–23 (MKLVSNKILFLATMVLASSSAFA) form the signal peptide.

Belongs to the LptA family. Component of the lipopolysaccharide transport and assembly complex.

Its subcellular location is the periplasm. Functionally, involved in the assembly of lipopolysaccharide (LPS). Required for the translocation of LPS from the inner membrane to the outer membrane. May form a bridge between the inner membrane and the outer membrane, via interactions with LptC and LptD, thereby facilitating LPS transfer across the periplasm. In Haemophilus influenzae (strain ATCC 51907 / DSM 11121 / KW20 / Rd), this protein is Lipopolysaccharide export system protein LptA.